Consider the following 251-residue polypeptide: Hydroxyacylglutathione hydrolase GloB (251 aa).

Histidine 53, histidine 55, aspartate 57, histidine 58, histidine 110, and aspartate 127 together coordinate Zn(2+). Residues 136–138 (RLF), 165–167 (HEY), and 245–248 (RSKK) each bind substrate. Histidine 165 is a Zn(2+) binding site.

Belongs to the metallo-beta-lactamase superfamily. Glyoxalase II family. As to quaternary structure, monomer. The cofactor is Zn(2+).

The catalysed reaction is an S-(2-hydroxyacyl)glutathione + H2O = a 2-hydroxy carboxylate + glutathione + H(+). It carries out the reaction (R)-S-lactoylglutathione + H2O = (R)-lactate + glutathione + H(+). Its pathway is secondary metabolite metabolism; methylglyoxal degradation; (R)-lactate from methylglyoxal: step 2/2. Its activity is regulated as follows. Is inhibited by Cu(2+). Type II glyoxalase that catalyzes the hydrolysis of (R)-S-lactoylglutathione to (R)-lactate and glutathione. Is more efficient than the isozyme GloC, and plays a major contribution to methylglyoxal (MG) detoxification in E.coli. The two isoenzymes have additive effects and ensure maximal MG degradation. This is Hydroxyacylglutathione hydrolase GloB from Escherichia coli (strain K12).